Reading from the N-terminus, the 120-residue chain is Large ribosomal subunit protein uL18 (120 aa).

Belongs to the universal ribosomal protein uL18 family. In terms of assembly, part of the 50S ribosomal subunit; part of the 5S rRNA/L5/L18/L25 subcomplex. Contacts the 5S and 23S rRNAs.

Its function is as follows. This is one of the proteins that bind and probably mediate the attachment of the 5S RNA into the large ribosomal subunit, where it forms part of the central protuberance. The polypeptide is Large ribosomal subunit protein uL18 (Xanthobacter autotrophicus (strain ATCC BAA-1158 / Py2)).